We begin with the raw amino-acid sequence, 314 residues long: MENKTEVTQFILLGLTNDSELQVPLFITFPFIYIITLVGNLGIIVLIFWDSCLHNPMYFFLSNLSLVDFCYSSAVTPIVMAGFLIEDKVISYNACAAQMYIFVAFATVENYLLASMAYDRYAAVCKPLHYTTTMTTTVCARLAIGSYLCGFLNASIHTGDTFSLSFCKSNEVHHFFCDIPAVMVLSCSDRHISELVLIYVVSFNIFIALLVILISYTFIFITILKMHSASVYQKPLSTCASHFIAVGIFYGTIIFMYLQPSSSHSMDTDKMAPVFYTMVIPMLNPLVYSLRNKEVKSAFKKVVEKAKLSVGWSV.

The Extracellular portion of the chain corresponds to methionine 1 to valine 23. N-linked (GlcNAc...) asparagine glycosylation is found at asparagine 3 and asparagine 17. The chain crosses the membrane as a helical span at residues proline 24–isoleucine 44. Residues valine 45–cysteine 52 lie on the Cytoplasmic side of the membrane. The helical transmembrane segment at leucine 53–serine 73 threads the bilayer. Topologically, residues alanine 74–alanine 97 are extracellular. Residues cysteine 95 and cysteine 187 are joined by a disulfide bond. A helical transmembrane segment spans residues glutamine 98 to tyrosine 118. At aspartate 119–threonine 131 the chain is on the cytoplasmic side. A helical membrane pass occupies residues threonine 132 to leucine 152. N-linked (GlcNAc...) asparagine glycosylation is present at asparagine 153. Residues asparagine 153–glutamate 194 are Extracellular-facing. Residues leucine 195–serine 215 traverse the membrane as a helical segment. The Cytoplasmic portion of the chain corresponds to tyrosine 216–proline 235. A helical membrane pass occupies residues leucine 236–methionine 256. Topologically, residues tyrosine 257–aspartate 269 are extracellular. The helical transmembrane segment at lysine 270 to leucine 290 threads the bilayer. Residues arginine 291 to valine 314 are Cytoplasmic-facing.

Belongs to the G-protein coupled receptor 1 family.

It is found in the cell membrane. In terms of biological role, odorant receptor. In Homo sapiens (Human), this protein is Olfactory receptor 5B3 (OR5B3).